Reading from the N-terminus, the 533-residue chain is CEP295 N-terminal-like protein (533 aa).

Disordered regions lie at residues 1–40 (MQRD…TTLQ), 84–176 (RSMG…RVTR), 286–333 (LKAD…ETTE), and 370–399 (AGTS…LEDE). Residues 40–72 (QQWKARQLQRLAEELKAEWQEARLQQVRQAERL) adopt a coiled-coil conformation. Residues 107–126 (KERNRAAFREERGRREEHPR) are compositionally biased toward basic and acidic residues. Residues 416–531 (MALRQKQKAE…ARKRLQEFQK (116 aa)) are a coiled coil.

Expressed in mature spermatozoa (at protein level). Detected in retina, lung and kidney. In brain, highly expressed in brain-stem, cerebral cortex and thalamus with lesser expression in cerebellum and hippocampus.

Its subcellular location is the cell projection. It is found in the cilium. This Mus musculus (Mouse) protein is CEP295 N-terminal-like protein.